Here is a 910-residue protein sequence, read N- to C-terminus: Putative coatomer subunit beta'-3 (910 aa).

WD repeat units follow at residues glutamine 13–serine 52, valine 55–valine 94, alanine 97–glutamine 136, glycine 140–threonine 180, glycine 183–threonine 224, glycine 227–threonine 266, tyrosine 269–aspartate 309, threonine 351–leucine 393, and arginine 461–aspartate 501. A compositionally biased stretch (acidic residues) spans glutamate 865–glycine 884. The disordered stretch occupies residues glutamate 865–alanine 910. A compositionally biased stretch (polar residues) spans threonine 886–alanine 910.

It belongs to the WD repeat COPB2 family. Oligomeric complex that consists of at least the alpha, beta, beta', gamma, delta, epsilon and zeta subunits.

It is found in the cytoplasm. The protein resides in the golgi apparatus membrane. The protein localises to the cytoplasmic vesicle. Its subcellular location is the COPI-coated vesicle membrane. In terms of biological role, the coatomer is a cytosolic protein complex that binds to dilysine motifs and reversibly associates with Golgi non-clathrin-coated vesicles, which further mediate biosynthetic protein transport from the ER, via the Golgi up to the trans Golgi network. Coatomer complex is required for budding from Golgi membranes, and is essential for the retrograde Golgi-to-ER transport of dilysine-tagged proteins. This is Putative coatomer subunit beta'-3 from Oryza sativa subsp. japonica (Rice).